Reading from the N-terminus, the 327-residue chain is GMP reductase (327 aa).

Cysteine 176 acts as the Thioimidate intermediate in catalysis. 205–228 provides a ligand contact to NADP(+); it reads IIADGGIRTHGDIAKSIRFGASMV.

Belongs to the IMPDH/GMPR family. GuaC type 2 subfamily.

It catalyses the reaction IMP + NH4(+) + NADP(+) = GMP + NADPH + 2 H(+). In terms of biological role, catalyzes the irreversible NADPH-dependent deamination of GMP to IMP. It functions in the conversion of nucleobase, nucleoside and nucleotide derivatives of G to A nucleotides, and in maintaining the intracellular balance of A and G nucleotides. This is GMP reductase from Streptococcus agalactiae serotype III (strain NEM316).